The chain runs to 410 residues: Chloroacetanilide N-alkylformylase, ferredoxin reductase component (410 aa).

Residues glycine 14, aspartate 36, lysine 49, valine 82, arginine 130, aspartate 279, and valine 298 each contribute to the FAD site.

This sequence belongs to the FAD-dependent oxidoreductase family. As to quaternary structure, the chloroacetanilide N-alkylformylase multicomponent enzyme system is composed of an oxygenase component (CndA) and an electron transfer component formed by a ferredoxin reductase (CndC1) and a ferredoxin (CndB1). In vitro, chloroacetanilide N-alkylformylase assays in which CndB1 is substituted for CndB2 demonstrate that the two enzymes possess nearly identical activities. It depends on FAD as a cofactor.

It carries out the reaction 2 reduced [2Fe-2S]-[ferredoxin] + NAD(+) + H(+) = 2 oxidized [2Fe-2S]-[ferredoxin] + NADH. Component of the chloroacetanilide N-alkylformylase multicomponent enzyme system involved in the degradation of chloroacetanilide herbicides (N-alkoxyalkyl-N-chloroacetyl-substituted aniline derivatives). In vitro, catalyzes the transfers of electrons from ferredoxin (CndB1) to NADH. N-dealkylase utilizes NADH, but not NADPH, as the electron donor. The polypeptide is Chloroacetanilide N-alkylformylase, ferredoxin reductase component (Rhizorhabdus wittichii (strain DC-6 / KACC 16600) (Sphingomonas wittichii)).